Here is a 160-residue protein sequence, read N- to C-terminus: Eukaryotic translation initiation factor 5A-3 (160 aa).

A compositionally biased stretch (basic and acidic residues) spans 1–12; sequence MSDEEHHFESKA. The tract at residues 1–21 is disordered; sequence MSDEEHHFESKADAGASKTYP. At Lys-52 the chain carries Hypusine.

This sequence belongs to the eIF-5A family. In terms of processing, lys-52 undergoes hypusination, a unique post-translational modification that consists in the addition of a butylamino group from spermidine to lysine side chain, leading to the formation of the unusual amino acid hypusine. eIF-5As are the only known proteins to undergo this modification, which is essential for their function.

In terms of biological role, translation factor that promotes translation elongation and termination, particularly upon ribosome stalling at specific amino acid sequence contexts. Binds between the exit (E) and peptidyl (P) site of the ribosome and promotes rescue of stalled ribosome: specifically required for efficient translation of polyproline-containing peptides as well as other motifs that stall the ribosome. Acts as a ribosome quality control (RQC) cofactor by joining the RQC complex to facilitate peptidyl transfer during CAT tailing step. The chain is Eukaryotic translation initiation factor 5A-3 (EIF5A3) from Solanum tuberosum (Potato).